Reading from the N-terminus, the 404-residue chain is L-cysteine:1D-myo-inositol 2-amino-2-deoxy-alpha-D-glucopyranoside ligase (404 aa).

Residue cysteine 35 participates in Zn(2+) binding. L-cysteinyl-5'-AMP-binding positions include 35 to 38 (CGIT), threonine 50, and 73 to 75 (NVT). A 'HIGH' region motif is present at residues 37–47 (ITPYDATHLGH). The 'ERGGDP' region motif lies at 178 to 183 (ERGGDP). Tryptophan 219 contacts L-cysteinyl-5'-AMP. A Zn(2+)-binding site is contributed by cysteine 223. Residue 241–243 (GND) coordinates L-cysteinyl-5'-AMP. Histidine 248 contributes to the Zn(2+) binding site. Isoleucine 275 contributes to the L-cysteinyl-5'-AMP binding site. The 'KMSKS' region signature appears at 281-285 (KMSKS).

It belongs to the class-I aminoacyl-tRNA synthetase family. MshC subfamily. In terms of assembly, monomer. The cofactor is Zn(2+).

The catalysed reaction is 1D-myo-inositol 2-amino-2-deoxy-alpha-D-glucopyranoside + L-cysteine + ATP = 1D-myo-inositol 2-(L-cysteinylamino)-2-deoxy-alpha-D-glucopyranoside + AMP + diphosphate + H(+). Its function is as follows. Catalyzes the ATP-dependent condensation of GlcN-Ins and L-cysteine to form L-Cys-GlcN-Ins. This Salinispora tropica (strain ATCC BAA-916 / DSM 44818 / JCM 13857 / NBRC 105044 / CNB-440) protein is L-cysteine:1D-myo-inositol 2-amino-2-deoxy-alpha-D-glucopyranoside ligase.